Consider the following 392-residue polypeptide: Stilbene synthase 5 (392 aa).

55–58 (KFNR) provides a ligand contact to substrate. The active site involves Cys-164. Residues Leu-267 and 305–307 (GGP) contribute to the substrate site.

Belongs to the thiolase-like superfamily. Chalcone/stilbene synthases family. Homodimer.

It localises to the cytoplasm. It carries out the reaction 4-coumaroyl-CoA + 3 malonyl-CoA + 3 H(+) = trans-resveratrol + 4 CO2 + 4 CoA. It functions in the pathway phytoalexin biosynthesis; 3,4',5-trihydroxystilbene biosynthesis; 3,4',5-trihydroxystilbene from trans-4-coumarate: step 2/2. Functionally, mediates resistance to pathogens which are sensitive to stilbenes. The polypeptide is Stilbene synthase 5 (Vitis vinifera (Grape)).